Consider the following 143-residue polypeptide: Transthyretin-like protein 33 (143 aa).

A signal peptide spans 1-20 (MSRLACISSLFILCAIGSEA).

It belongs to the nematode transthyretin-like family. Expressed in head cells next to and anterior of the first pharyngeal bulb, the pharynx, and the hypodermis.

It localises to the secreted. In terms of biological role, protects dopaminergic neurons from degeneration caused by oxidative stress. The chain is Transthyretin-like protein 33 from Caenorhabditis elegans.